A 456-amino-acid polypeptide reads, in one-letter code: Bifunctional protein GlmU (456 aa).

The segment at 1–229 (MLNNAMSVVI…LSEVEGVNNR (229 aa)) is pyrophosphorylase. Residues 11–14 (LAAG), Lys-25, Gln-76, 81–82 (GT), 103–105 (YGD), Gly-140, Glu-154, Asn-169, and Asn-227 contribute to the UDP-N-acetyl-alpha-D-glucosamine site. Asp-105 lines the Mg(2+) pocket. Asn-227 is a Mg(2+) binding site. Residues 230-250 (LQLSRLERVYQSEQAEKLLLA) are linker. The N-acetyltransferase stretch occupies residues 251-456 (GVMLRDPARF…EGWRRPVKKK (206 aa)). Positions 333 and 351 each coordinate UDP-N-acetyl-alpha-D-glucosamine. His-363 (proton acceptor) is an active-site residue. UDP-N-acetyl-alpha-D-glucosamine-binding residues include Tyr-366 and Asn-377. Acetyl-CoA contacts are provided by residues Ala-380, 386–387 (NY), Ser-405, Ala-423, and Arg-440.

In the N-terminal section; belongs to the N-acetylglucosamine-1-phosphate uridyltransferase family. The protein in the C-terminal section; belongs to the transferase hexapeptide repeat family. In terms of assembly, homotrimer. Mg(2+) serves as cofactor.

The protein localises to the cytoplasm. It carries out the reaction alpha-D-glucosamine 1-phosphate + acetyl-CoA = N-acetyl-alpha-D-glucosamine 1-phosphate + CoA + H(+). The catalysed reaction is N-acetyl-alpha-D-glucosamine 1-phosphate + UTP + H(+) = UDP-N-acetyl-alpha-D-glucosamine + diphosphate. It participates in nucleotide-sugar biosynthesis; UDP-N-acetyl-alpha-D-glucosamine biosynthesis; N-acetyl-alpha-D-glucosamine 1-phosphate from alpha-D-glucosamine 6-phosphate (route II): step 2/2. It functions in the pathway nucleotide-sugar biosynthesis; UDP-N-acetyl-alpha-D-glucosamine biosynthesis; UDP-N-acetyl-alpha-D-glucosamine from N-acetyl-alpha-D-glucosamine 1-phosphate: step 1/1. The protein operates within bacterial outer membrane biogenesis; LPS lipid A biosynthesis. Its function is as follows. Catalyzes the last two sequential reactions in the de novo biosynthetic pathway for UDP-N-acetylglucosamine (UDP-GlcNAc). The C-terminal domain catalyzes the transfer of acetyl group from acetyl coenzyme A to glucosamine-1-phosphate (GlcN-1-P) to produce N-acetylglucosamine-1-phosphate (GlcNAc-1-P), which is converted into UDP-GlcNAc by the transfer of uridine 5-monophosphate (from uridine 5-triphosphate), a reaction catalyzed by the N-terminal domain. The protein is Bifunctional protein GlmU of Shigella dysenteriae serotype 1 (strain Sd197).